The primary structure comprises 353 residues: Protein RecA (353 aa).

67 to 74 (GPESSGKT) lines the ATP pocket.

It belongs to the RecA family.

It is found in the cytoplasm. Its function is as follows. Can catalyze the hydrolysis of ATP in the presence of single-stranded DNA, the ATP-dependent uptake of single-stranded DNA by duplex DNA, and the ATP-dependent hybridization of homologous single-stranded DNAs. It interacts with LexA causing its activation and leading to its autocatalytic cleavage. The polypeptide is Protein RecA (Shewanella sediminis (strain HAW-EB3)).